Here is an 82-residue protein sequence, read N- to C-terminus: Small ribosomal subunit protein bS16 (82 aa).

Belongs to the bacterial ribosomal protein bS16 family.

The chain is Small ribosomal subunit protein bS16 from Klebsiella pneumoniae (strain 342).